We begin with the raw amino-acid sequence, 476 residues long: Adenosylhomocysteinase (476 aa).

The substrate site is built by threonine 67, aspartate 142, and glutamate 202. NAD(+) is bound at residue 203–205 (TTT). The substrate site is built by lysine 232 and aspartate 236. NAD(+)-binding positions include asparagine 237, 266–271 (GYGDVG), glutamate 289, asparagine 324, 345–347 (IGH), and asparagine 390.

Belongs to the adenosylhomocysteinase family. Requires NAD(+) as cofactor.

It is found in the cytoplasm. It catalyses the reaction S-adenosyl-L-homocysteine + H2O = L-homocysteine + adenosine. It participates in amino-acid biosynthesis; L-homocysteine biosynthesis; L-homocysteine from S-adenosyl-L-homocysteine: step 1/1. Functionally, may play a key role in the regulation of the intracellular concentration of adenosylhomocysteine. The polypeptide is Adenosylhomocysteinase (Synechococcus sp. (strain CC9311)).